Consider the following 461-residue polypeptide: MLKIFNTLTRQKEEFKPIHAGEVGMYVCGITVYDLCHIGHGRTFVAFDVVARYLRFLGYKLKYVRNITDIDDKIIKRANENGESFVALVDRMIAEMHKDFDALNILRPDMEPRATHHIAEIIELTEQLIAKGHAYVADNGDVMFDVPTDPTYGVLSRQDLDQLQAGARVDVVDDKRNPMDFVLWKMSKEGEPSWPSPWGAGRPGWHIECSAMNCKQLGNHFDIHGGGSDLMFPHHENEIAQSTCAHDGLYVNYWMHSGMVMVDREKMSKSLGNFFTVRDVLKYYDAETVRYFLMSGHYRSQLNYSEENLKQARAALERLYTALRGTDKTVAPAGGEAFEARFIEAMDDDFNTPEAYSVLFDMAREVNRLKAEDMAAANAMASHLRKLSAVLGLLEQEPEAFLQSGAQADDSEVAEIEALIQQRLDARKAKDWAAADAARDRLNEMGIVLEDGPQGTTWRRK.

Residue Cys-28 coordinates Zn(2+). A 'HIGH' region motif is present at residues 30-40; that stretch reads ITVYDLCHIGH. Zn(2+) contacts are provided by Cys-209, His-234, and Glu-238. Positions 266–270 match the 'KMSKS' region motif; sequence KMSKS. Lys-269 provides a ligand contact to ATP.

The protein belongs to the class-I aminoacyl-tRNA synthetase family. Monomer. The cofactor is Zn(2+).

Its subcellular location is the cytoplasm. The enzyme catalyses tRNA(Cys) + L-cysteine + ATP = L-cysteinyl-tRNA(Cys) + AMP + diphosphate. In Escherichia coli O6:K15:H31 (strain 536 / UPEC), this protein is Cysteine--tRNA ligase.